The primary structure comprises 597 residues: tRNA uridine 5-carboxymethylaminomethyl modification enzyme MnmG (597 aa).

Residue 11 to 16 (GAGHAG) participates in FAD binding. 275 to 289 (SPRYCPSIEEKIERY) lines the NAD(+) pocket.

This sequence belongs to the MnmG family. In terms of assembly, homodimer. Heterotetramer of two MnmE and two MnmG subunits. Requires FAD as cofactor.

The protein resides in the cytoplasm. Functionally, NAD-binding protein involved in the addition of a carboxymethylaminomethyl (cmnm) group at the wobble position (U34) of certain tRNAs, forming tRNA-cmnm(5)s(2)U34. In Endomicrobium trichonymphae, this protein is tRNA uridine 5-carboxymethylaminomethyl modification enzyme MnmG.